A 540-amino-acid chain; its full sequence is MAVIFSSSALDSHTHVDKHLVRRPIRDLENNVDMLDHLSRVLTLSYQYHALGTAIALFACACAYALVAPRQPPKFPAPQLYDETGPIDLIALDKTIREGFQNYKGKYFTLKEAHGETVILPTKFMEELKALPDNMLNLDDEIDERFLSEHSLFTTTSVGGRISTVVNSVKNELTKTLGHLMGDIHEEVVYSFQELIPPCDDWTEIDIQSKLVRIVALVSGRIFVGLPMSRNQEYLDCIIEFTLNVFFAVPEIRAYPRLLRWTSRYLNTKVRAVHKSLATMRRLMAPIIAGTKQQLEMGTGPHNMCAWNIKNSNQKERDSLNIQAQMQLATSMAAIHTTSMTVTNAIFDLAARPEYLQPLRDELQDLRATEPLPYLNKSSMPKLRKLDSFLKESHRLSPISLLNMRRKIVQPITLHDGTVLQPGMHIAFPLHQVSNDEDLWENPSQFDGFRFQKLRDLPGNESKYQFTATGTNNLDFGYGVHACPGRFFAANEIKMILVHLIDNFDFKFKGDIGRPDSLWTPGGYHPDPSVRVLLKRRLKA.

A helical transmembrane segment spans residues 48–68; it reads YHALGTAIALFACACAYALVA. N-linked (GlcNAc...) asparagine glycans are attached at residues N376 and N460. C483 contributes to the heme binding site.

The protein belongs to the cytochrome P450 family. Heme serves as cofactor.

Its subcellular location is the membrane. Its pathway is sesquiterpene biosynthesis. Cytochrome P450 monooxygenase; part of the gene cluster that mediates the biosynthesis of PR-toxin, a bicyclic sesquiterpene belonging to the eremophilane class and acting as a mycotoxin. The first step of the pathway is catalyzed by the aristolochene synthase which performs the cyclization of trans,trans-farnesyl diphosphate (FPP) to the bicyclic sesquiterpene aristolochene. Following the formation of aristolochene, the non-oxygenated aristolochene is converted to the trioxygenated intermediate eremofortin B, via 7-epi-neopetasone. This conversion appears to involve three enzymes, a hydroxysterol oxidase-like enzyme, the quinone-oxidase prx3 that forms the quinone-type-structure in the bicyclic nucleus of aristolochene with the C8-oxo group and the C-3 hydroxyl group, and the P450 monooxygenase ORF6 that introduces the epoxide at the double bond between carbons 1 and 2. No monoxy or dioxy-intermediates have been reported to be released to the broth, so these three early oxidative reactions may be coupled together. Eremofortin B is further oxidized by another P450 monooxygenase, that introduces a second epoxide between carbons 7 and 11 prior to acetylation to eremofortin A by the acetyltransferase ORF8. The second epoxidation may be performed by a second P450 monooxygenase. After the acetylation step, eremofortin A is converted to eremofortin C and then to PR-toxin. First the conversion of eremofortin A to eremofortin C proceeds by oxidation of the side chain of the molecule at C-12 and is catalyzed by the short-chain oxidoreductase prx1. The cytochrome P450 monooxygenase ORF6 is probably also involved in this step. The primary alcohol formed at C-12 is finally oxidized by the short-chain alcohol dehydrogenase prx4 that forms PR-toxin. In Penicillium roqueforti (strain FM164), this protein is Cytochrome P450 monooxygenase ORF5.